The sequence spans 55 residues: UPF0391 membrane protein NE1120 (55 aa).

The next 2 helical transmembrane spans lie at Met4–Ala24 and Leu27–Leu47.

The protein belongs to the UPF0391 family.

The protein localises to the cell membrane. The protein is UPF0391 membrane protein NE1120 of Nitrosomonas europaea (strain ATCC 19718 / CIP 103999 / KCTC 2705 / NBRC 14298).